Here is a 448-residue protein sequence, read N- to C-terminus: Probable tryptophanase (448 aa).

Lys253 is modified (N6-(pyridoxal phosphate)lysine).

Belongs to the beta-eliminating lyase family. Pyridoxal 5'-phosphate is required as a cofactor.

The catalysed reaction is L-tryptophan + H2O = indole + pyruvate + NH4(+). Its pathway is amino-acid degradation; L-tryptophan degradation via pyruvate pathway; indole and pyruvate from L-tryptophan: step 1/1. The protein is Probable tryptophanase of Halobacterium salinarum (strain ATCC 29341 / DSM 671 / R1).